Reading from the N-terminus, the 322-residue chain is tRNA dimethylallyltransferase (322 aa).

21–28 contributes to the ATP binding site; sequence GQTAVGKT. A substrate-binding site is contributed by 23-28; that stretch reads TAVGKT. The tract at residues 46–49 is interaction with substrate tRNA; sequence DSGC.

It belongs to the IPP transferase family. Monomer. Requires Mg(2+) as cofactor.

The enzyme catalyses adenosine(37) in tRNA + dimethylallyl diphosphate = N(6)-dimethylallyladenosine(37) in tRNA + diphosphate. Catalyzes the transfer of a dimethylallyl group onto the adenine at position 37 in tRNAs that read codons beginning with uridine, leading to the formation of N6-(dimethylallyl)adenosine (i(6)A). In Wigglesworthia glossinidia brevipalpis, this protein is tRNA dimethylallyltransferase.